Reading from the N-terminus, the 305-residue chain is Olfactory receptor 4F4 (305 aa).

Over Met-1–Thr-18 the chain is Extracellular. Residues Phe-19–Val-42 traverse the membrane as a helical segment. Topologically, residues Val-43–Ser-50 are cytoplasmic. The helical transmembrane segment at Pro-51–Pro-72 threads the bilayer. At Lys-73–Gln-93 the chain is on the extracellular side. A disulfide bridge connects residues Cys-90 and Cys-182. The chain crosses the membrane as a helical span at residues Ile-94–Phe-113. Residues Asp-114–Asn-132 are Cytoplasmic-facing. Residues Ala-133–Ser-151 traverse the membrane as a helical segment. Topologically, residues Gln-152 to Leu-188 are extracellular. Residues Asp-189–Thr-212 traverse the membrane as a helical segment. Over Ile-213–Lys-228 the chain is Cytoplasmic. The helical transmembrane segment at Ala-229–Tyr-251 threads the bilayer. Residues Ala-252–Lys-262 lie on the Extracellular side of the membrane. The helical transmembrane segment at Phe-263–Leu-282 threads the bilayer. At Arg-283–Phe-305 the chain is on the cytoplasmic side.

The protein belongs to the G-protein coupled receptor 1 family.

It localises to the cell membrane. Odorant receptor. The sequence is that of Olfactory receptor 4F4 (OR4F4) from Homo sapiens (Human).